An 800-amino-acid polypeptide reads, in one-letter code: Phenylalanine--tRNA ligase beta subunit (800 aa).

A tRNA-binding domain is found at 39–154; it reads TKDIKNLVVG…ESQVPGTDAL (116 aa). The B5 domain maps to 408–483; that stretch reads AFITPIDITA…RIYGYDDIPS (76 aa). Mg(2+) is bound by residues aspartate 461, aspartate 467, glutamate 470, and glutamate 471. The FDX-ACB domain maps to 708–800; that stretch reads PRFPGMSRDI…ALIEQGAVIR (93 aa).

Belongs to the phenylalanyl-tRNA synthetase beta subunit family. Type 1 subfamily. In terms of assembly, tetramer of two alpha and two beta subunits. The cofactor is Mg(2+).

It localises to the cytoplasm. The catalysed reaction is tRNA(Phe) + L-phenylalanine + ATP = L-phenylalanyl-tRNA(Phe) + AMP + diphosphate + H(+). The protein is Phenylalanine--tRNA ligase beta subunit of Staphylococcus aureus (strain MSSA476).